The chain runs to 1035 residues: Cell-division control histidine kinase PdhS (1035 aa).

Residues 1-613 are important for polar localization; it reads MSGSYPFIDI…HADGSEEPVD (613 aa). Residues 500-533 form a disordered region; sequence QGLANTRAESETPVSETSSIEPVEPTPPVKTRSE. The interaction with DivK stretch occupies residues 614–1035; it reads AHLNAIAWRG…VFPPTRVLAD (422 aa). The PAS domain maps to 659–730; it reads HVEELKTILD…YLHGLSGNGV (72 aa). The Histidine kinase domain occupies 802 to 1031; it reads RISHEIRTPL…VVEIVFPPTR (230 aa). Position 805 is a phosphohistidine; by autocatalysis (His805).

As to quaternary structure, interacts with DivK.

It localises to the cytoplasm. The enzyme catalyses ATP + protein L-histidine = ADP + protein N-phospho-L-histidine.. Functionally, functions as a polar differentiation marker. Essential protein that, by localizing in the old pole of dividing cells, controls cell division and maturation, probably through control of DivK phosphorylation status and cellular distribution, which in turn regulates CtrA, a transcriptional regulator of the minB operon. The asymmetrical localization of this protein is probably required for cells to enter a new division cycle. In Brucella canis (strain ATCC 23365 / NCTC 10854 / RM-666), this protein is Cell-division control histidine kinase PdhS (pdhS).